Reading from the N-terminus, the 143-residue chain is Large ribosomal subunit protein uL11 (143 aa).

This sequence belongs to the universal ribosomal protein uL11 family. In terms of assembly, part of the ribosomal stalk of the 50S ribosomal subunit. Interacts with L10 and the large rRNA to form the base of the stalk. L10 forms an elongated spine to which L12 dimers bind in a sequential fashion forming a multimeric L10(L12)X complex. Post-translationally, one or more lysine residues are methylated.

Its function is as follows. Forms part of the ribosomal stalk which helps the ribosome interact with GTP-bound translation factors. This is Large ribosomal subunit protein uL11 from Caulobacter sp. (strain K31).